A 647-amino-acid polypeptide reads, in one-letter code: RAF proto-oncogene serine/threonine-protein kinase (647 aa).

At Ser43 the chain carries Phosphoserine. The RBD domain occupies 56 to 131; that stretch reads NTIRVFLPNK…IGEELQVDFL (76 aa). Residues 138-184 form a Phorbol-ester/DAG-type zinc finger; the sequence is THNFARKTFLKLAFCDICQKFLLNGFRCQTCGYKFHEHCSTKVPTMC. Disordered regions lie at residues 236–269 and 284–334; these read HVFT…VSTT and HSES…RPRG. Over residues 239-269 the composition is skewed to polar residues; that stretch reads TFNTSNPSSEGTLSQRQRSTSTPNVHMVSTT. At Ser259 the chain carries Phosphoserine. The residue at position 268 (Thr268) is a Phosphothreonine; by autocatalysis. Positions 286 to 297 are enriched in low complexity; it reads ESASPSALSGSP. The segment covering 298–309 has biased composition (polar residues); that stretch reads NNMSPTGWSQPK. Phosphoserine is present on Ser338. The 261-residue stretch at 349–609 folds into the Protein kinase domain; sequence VMLSTRIGSG…PQILSSIELL (261 aa). Residues 355–363 and Lys375 contribute to the ATP site; that span reads IGSGSFGTV. Catalysis depends on Asp468, which acts as the Proton acceptor. Phosphoserine occurs at positions 499 and 621.

Belongs to the protein kinase superfamily. TKL Ser/Thr protein kinase family. RAF subfamily. Post-translationally, phosphorylation at Ser-259 inactivates kinase activity. Dephosphorylation of Ser-259 by a complex containing protein phosphatase 1 relieves inactivation, leading to stimulate RAF1 activity. As to expression, isoform 1 was present in all tissues tested: skeletal muscle, intestine, brain, gizzard, heart, lung, kidney, bone marrow, spleen and bursa of Fabricius. Isoform 2 was only detected in brain, heart and skeletal muscle. In brain and heart isoform 1 is more abundant than isoform 2. In skeletal muscle isoform 2 is more abundant than isoform 1.

It localises to the cytoplasm. The protein localises to the cell membrane. It carries out the reaction L-seryl-[protein] + ATP = O-phospho-L-seryl-[protein] + ADP + H(+). The enzyme catalyses L-threonyl-[protein] + ATP = O-phospho-L-threonyl-[protein] + ADP + H(+). Serine/threonine-protein kinase that acts as a regulatory link between the membrane-associated Ras GTPases and the MAPK/ERK cascade, and this critical regulatory link functions as a switch determining cell fate decisions. RAF1 activation initiates a mitogen-activated protein kinase (MAPK) cascade that comprises a sequential phosphorylation of the dual-specific MAPK kinases (MAP2K1/MEK1 and MAP2K2/MEK2) and the extracellular signal-regulated kinases (MAPK3/ERK1 and MAPK1/ERK2). The polypeptide is RAF proto-oncogene serine/threonine-protein kinase (RAF1) (Gallus gallus (Chicken)).